Reading from the N-terminus, the 198-residue chain is UPF0301 protein Tfu_2389 (198 aa).

It belongs to the UPF0301 (AlgH) family.

In Thermobifida fusca (strain YX), this protein is UPF0301 protein Tfu_2389.